Consider the following 248-residue polypeptide: Small ribosomal subunit protein uS2 (248 aa).

Belongs to the universal ribosomal protein uS2 family.

The protein is Small ribosomal subunit protein uS2 of Janthinobacterium sp. (strain Marseille) (Minibacterium massiliensis).